We begin with the raw amino-acid sequence, 501 residues long: Cyclin-dependent kinase 19 (501 aa).

Residue Met-1 is modified to N-acetylmethionine. The Protein kinase domain maps to 21 to 335; it reads EYEGCKVGRG…SEQALQDPYF (315 aa). ATP contacts are provided by residues 27–35 and Lys-52; that span reads VGRGTYGHV. Catalysis depends on Asp-151, which acts as the Proton acceptor. The segment at 362–501 is disordered; it reads DEPEEKGDKN…YHSSHQTHRY (140 aa). Low complexity predominate over residues 371-392; it reads NQPQQQNPHQQPAAPAQQTAAP. Positions 408–421 are enriched in gly residues; that stretch reads TAGGATAGGGGAGA. At Ser-449 the chain carries Phosphoserine. A compositionally biased stretch (low complexity) spans 467–495; sequence YQSSVQGSSQSQSTLGYSSSQQSTQYHSS.

The protein belongs to the protein kinase superfamily. CMGC Ser/Thr protein kinase family. CDC2/CDKX subfamily.

The protein resides in the cytoplasm. The protein localises to the perinuclear region. It localises to the nucleus. It carries out the reaction L-seryl-[protein] + ATP = O-phospho-L-seryl-[protein] + ADP + H(+). The catalysed reaction is L-threonyl-[protein] + ATP = O-phospho-L-threonyl-[protein] + ADP + H(+). The sequence is that of Cyclin-dependent kinase 19 (Cdk19) from Mus musculus (Mouse).